The sequence spans 208 residues: Protein late bloomer (208 aa).

4 helical membrane passes run 10 to 30 (IASIVLNAVLGFLAAGAIGWI), 41 to 61 (FVIAAYIACSLILVFALLGIF), 67 to 87 (SVVLTATSAVFLLILAILQIV), and 174 to 194 (FIIVSWVLVAFELICFALAVF).

This sequence belongs to the tetraspanin (TM4SF) family. In terms of tissue distribution, transiently expressed on motor axons, growth cones and terminal arbors.

Its subcellular location is the membrane. It localises to the synapse. In terms of biological role, facilitates synapse formation. In Drosophila melanogaster (Fruit fly), this protein is Protein late bloomer (lbm).